The primary structure comprises 169 residues: 3-hydroxyacyl-[acyl-carrier-protein] dehydratase FabZ (169 aa).

His74 is a catalytic residue.

The protein belongs to the thioester dehydratase family. FabZ subfamily.

The protein resides in the cytoplasm. It catalyses the reaction a (3R)-hydroxyacyl-[ACP] = a (2E)-enoyl-[ACP] + H2O. In terms of biological role, involved in unsaturated fatty acids biosynthesis. Catalyzes the dehydration of short chain beta-hydroxyacyl-ACPs and long chain saturated and unsaturated beta-hydroxyacyl-ACPs. The chain is 3-hydroxyacyl-[acyl-carrier-protein] dehydratase FabZ from Gluconobacter oxydans (strain 621H) (Gluconobacter suboxydans).